The sequence spans 357 residues: Peptide chain release factor 1 (357 aa).

Residue Q236 is modified to N5-methylglutamine.

The protein belongs to the prokaryotic/mitochondrial release factor family. Methylated by PrmC. Methylation increases the termination efficiency of RF1.

Its subcellular location is the cytoplasm. Functionally, peptide chain release factor 1 directs the termination of translation in response to the peptide chain termination codons UAG and UAA. This chain is Peptide chain release factor 1 (prfA), found in Mycobacterium bovis (strain ATCC BAA-935 / AF2122/97).